A 636-amino-acid chain; its full sequence is 1-deoxy-D-xylulose-5-phosphate synthase (636 aa).

Thiamine diphosphate contacts are provided by residues histidine 72 and 113–115 (GHA). Residue aspartate 144 coordinates Mg(2+). Thiamine diphosphate-binding positions include 145 to 146 (GA), asparagine 174, tyrosine 287, and glutamate 370. Asparagine 174 contacts Mg(2+).

The protein belongs to the transketolase family. DXPS subfamily. In terms of assembly, homodimer. The cofactor is Mg(2+). Requires thiamine diphosphate as cofactor.

It catalyses the reaction D-glyceraldehyde 3-phosphate + pyruvate + H(+) = 1-deoxy-D-xylulose 5-phosphate + CO2. It functions in the pathway metabolic intermediate biosynthesis; 1-deoxy-D-xylulose 5-phosphate biosynthesis; 1-deoxy-D-xylulose 5-phosphate from D-glyceraldehyde 3-phosphate and pyruvate: step 1/1. Its function is as follows. Catalyzes the acyloin condensation reaction between C atoms 2 and 3 of pyruvate and glyceraldehyde 3-phosphate to yield 1-deoxy-D-xylulose-5-phosphate (DXP). The polypeptide is 1-deoxy-D-xylulose-5-phosphate synthase (Rippkaea orientalis (strain PCC 8801 / RF-1) (Cyanothece sp. (strain PCC 8801))).